The chain runs to 154 residues: MTQVIIDGDACPVTNSIIELTKGTGIFVTVVRSFSHFSTVIQPEHVNIIYVDDGPDAVDYRIVKLVHSDDLVVTQDYGLASLLLNKAKIVMHHKGFIYNQENINTLLEQRHASAQFRKSGGRTKGPAAFTEEDVSKFESIFSNLIHKYFLETED.

Belongs to the UPF0178 family.

The polypeptide is UPF0178 protein SSP2038 (Staphylococcus saprophyticus subsp. saprophyticus (strain ATCC 15305 / DSM 20229 / NCIMB 8711 / NCTC 7292 / S-41)).